The following is a 368-amino-acid chain: Somatostatin receptor type 5 (368 aa).

The Extracellular portion of the chain corresponds to 1–45 (MEPLFPASPLTTWNTSSVVPSGSGDENGTLAGLGPSPGARAVVVP). N-linked (GlcNAc...) asparagine glycosylation is found at N14 and N27. A helical membrane pass occupies residues 46-66 (VLYLLVCAVGLGGNTLVIYVV). The Cytoplasmic segment spans residues 67–77 (LRHAKMKTVTN). The chain crosses the membrane as a helical span at residues 78–98 (IYILNLAVADVLLMLGLPFVA). The Extracellular segment spans residues 99-115 (TQNAISYWPFGPVLCRL). A disulfide bond links C113 and C188. Residues 116 to 136 (VMTLDGINQFTSIFCLTVMSV) traverse the membrane as a helical segment. Residues 137 to 158 (DRYLAVVHPIRSARWRRPRVAK) lie on the Cytoplasmic side of the membrane. The helical transmembrane segment at 159 to 179 (LASAAVWAFSLVMSLPLVVFA) threads the bilayer. Residues 180–207 (DIQEGWNTCNLSWPEPVGLWGAVFIIYT) lie on the Extracellular side of the membrane. N-linked (GlcNAc...) asparagine glycosylation is present at N189. Residues 208 to 228 (SVLGFFGPLLVICLCYLLIVV) traverse the membrane as a helical segment. The Cytoplasmic segment spans residues 229–251 (KLKASGVRVGSTRRRSERKVTRM). The chain crosses the membrane as a helical span at residues 252-272 (VVVVVLVFAGCWLPFFIVNIV). Topologically, residues 273–286 (NLAFALPEEPASAG) are extracellular. The helical transmembrane segment at 287–309 (AYFFVVVLSYANSCANPLLYGFL) threads the bilayer. Residues 310-368 (SDNFRQSFRKVLCLRKGYGAGAEDADATEPQPGPSSRLQEAMMPVRSCKANGLMQTSKL) lie on the Cytoplasmic side of the membrane. C322 is lipidated: S-palmitoyl cysteine; by ZDHHC5.

This sequence belongs to the G-protein coupled receptor 1 family. As to quaternary structure, heterodimer with SSTR2. Heterodimerization with SSTR2 increases cell growth inhibition activity of SSTR2. Palmitoylated by ZDHHC5, but not ZDHHC3, nor ZDHHC8. Palmitoylation creates an additional intracellular loop which is thought to be important for efficient coupling to G-proteins and may target the protein to lipid rafts.

It localises to the cell membrane. Receptor for somatostatin 28 and to a lesser extent for somatostatin-14. The activity of this receptor is mediated by G proteins which inhibit adenylyl cyclase. Increases cell growth inhibition activity of SSTR2 following heterodimerization. In Bos taurus (Bovine), this protein is Somatostatin receptor type 5 (SSTR5).